The sequence spans 177 residues: Large ribosomal subunit protein uL6 (177 aa).

It belongs to the universal ribosomal protein uL6 family. Part of the 50S ribosomal subunit.

In terms of biological role, this protein binds to the 23S rRNA, and is important in its secondary structure. It is located near the subunit interface in the base of the L7/L12 stalk, and near the tRNA binding site of the peptidyltransferase center. This is Large ribosomal subunit protein uL6 from Aromatoleum aromaticum (strain DSM 19018 / LMG 30748 / EbN1) (Azoarcus sp. (strain EbN1)).